We begin with the raw amino-acid sequence, 310 residues long: Bacteriochlorophyll synthase 34 kDa chain (310 aa).

Residues 1 to 13 show a composition bias toward polar residues; that stretch reads MSDMSDQTRLSSP. The disordered stretch occupies residues 1–20; the sequence is MSDMSDQTRLSSPPSLPLHK. The next 8 helical transmembrane spans lie at 39–59, 67–87, 112–132, 134–154, 166–186, 187–207, 248–268, and 287–307; these read VTWF…GALG, LLLG…VVND, HVYI…LFLG, QVAF…LRPI, LVAI…FAPL, TGES…IMTV, VIGL…AILL, and VFFN…AAIG.

The protein localises to the cell membrane. It functions in the pathway porphyrin-containing compound metabolism; bacteriochlorophyll biosynthesis (light-independent). Functionally, catalyzes the esterification of bacteriochlorophyllide a by geranylgeraniol-PPi. The polypeptide is Bacteriochlorophyll synthase 34 kDa chain (bchG) (Chloroflexus aurantiacus (strain ATCC 29366 / DSM 635 / J-10-fl)).